The chain runs to 149 residues: 3-dehydroquinate dehydratase (149 aa).

The active-site Proton acceptor is Tyr24. Positions 75, 81, and 88 each coordinate substrate. Catalysis depends on His101, which acts as the Proton donor. Substrate contacts are provided by residues 102-103 and Arg112; that span reads IS.

The protein belongs to the type-II 3-dehydroquinase family. Homododecamer.

It catalyses the reaction 3-dehydroquinate = 3-dehydroshikimate + H2O. It participates in metabolic intermediate biosynthesis; chorismate biosynthesis; chorismate from D-erythrose 4-phosphate and phosphoenolpyruvate: step 3/7. Catalyzes a trans-dehydration via an enolate intermediate. The chain is 3-dehydroquinate dehydratase from Methylobacterium radiotolerans (strain ATCC 27329 / DSM 1819 / JCM 2831 / NBRC 15690 / NCIMB 10815 / 0-1).